The following is a 447-amino-acid chain: Argininosuccinate synthase (447 aa).

Residues 20–28 (AFSGGLDTS) and Ala46 each bind ATP. Tyr102 contributes to the L-citrulline binding site. Positions 132 and 134 each coordinate ATP. The L-aspartate site is built by Thr134, Asn138, and Asp139. Residue Asn138 participates in L-citrulline binding. An ATP-binding site is contributed by Asp139. L-citrulline is bound by residues Arg142 and Ser195. Asp197 lines the ATP pocket. Residues Thr204, Glu206, and Glu283 each coordinate L-citrulline.

The protein belongs to the argininosuccinate synthase family. Type 2 subfamily. Homotetramer.

It localises to the cytoplasm. The catalysed reaction is L-citrulline + L-aspartate + ATP = 2-(N(omega)-L-arginino)succinate + AMP + diphosphate + H(+). It functions in the pathway amino-acid biosynthesis; L-arginine biosynthesis; L-arginine from L-ornithine and carbamoyl phosphate: step 2/3. This Neisseria gonorrhoeae (strain ATCC 700825 / FA 1090) protein is Argininosuccinate synthase.